Here is a 740-residue protein sequence, read N- to C-terminus: Polyribonucleotide nucleotidyltransferase (740 aa).

Mg(2+) contacts are provided by aspartate 514 and aspartate 520. In terms of domain architecture, KH spans 580-639; that stretch reads PRIITVKIPVDKIGEVIGPKRQMINQIQEDTGAEITIEDDGTIYIGAADGPAAEAARATI. Positions 651 to 723 constitute an S1 motif domain; it reads GERILGSVVK…SRGKLSLIPV (73 aa).

It belongs to the polyribonucleotide nucleotidyltransferase family. As to quaternary structure, homotrimer. It depends on Mg(2+) as a cofactor.

It localises to the cytoplasm. The catalysed reaction is RNA(n+1) + phosphate = RNA(n) + a ribonucleoside 5'-diphosphate. In terms of biological role, involved in mRNA degradation. Catalyzes the phosphorolysis of single-stranded polyribonucleotides processively in the 3'- to 5'-direction. This Streptomyces antibioticus protein is Polyribonucleotide nucleotidyltransferase.